We begin with the raw amino-acid sequence, 637 residues long: Interleukin-17 receptor E (637 aa).

Positions 1 to 24 are cleaved as a signal peptide; sequence MGSPRLAALLLSQPLLFICLAVSA. Residues 25 to 415 lie on the Extracellular side of the membrane; the sequence is QVACPCLPRW…LCPDVSHRHL (391 aa). Asn278 and Asn307 each carry an N-linked (GlcNAc...) asparagine glycan. A helical membrane pass occupies residues 416–436; sequence GLLILALLGLTTLLGVVLVLF. Over 437–637 the chain is Cytoplasmic; the sequence is CRRLLPGPGR…TNSPCGFSCL (201 aa). Positions 447–583 constitute an SEFIR domain; that stretch reads TRPVLLLHAA…LLRDLPRLLR (137 aa).

In terms of assembly, forms heterodimers with IL17RE; the heterodimer binds IL17C.

It localises to the cell membrane. In terms of biological role, specific functional receptor for IL17C, signaling through the NF-kappa-B and MAPK pathways. Requires TRAF3IP2 /ACT1 for signaling. Crucial regulator in innate immunity to bacterial pathogens. In Rattus norvegicus (Rat), this protein is Interleukin-17 receptor E (Il17re).